The sequence spans 120 residues: Cytochrome c2 iso-1 (120 aa).

Pyrrolidone carboxylic acid is present on Gln1. Heme c contacts are provided by Cys15, Cys18, His19, and Met98.

It belongs to the cytochrome c family. Post-translationally, binds 1 heme c group covalently per subunit.

In terms of biological role, cytochrome c2 is found mainly in purple, non-sulfur, photosynthetic bacteria where it functions as the electron donor to the oxidized bacteriochlorophyll in the photophosphorylation pathway. However, it may also have a role in the respiratory chain and is found in some non-photosynthetic bacteria. In Rhodospirillum centenum (Rhodocista centenaria), this protein is Cytochrome c2 iso-1.